The chain runs to 204 residues: Holliday junction branch migration complex subunit RuvA (204 aa).

Residues 1 to 63 (MIASLRGTVI…EDAMKLYGFI (63 aa)) are domain I. The interval 64 to 142 (DDQSREMFAL…AYTVGVVDDG (79 aa)) is domain II. Residues 143 to 151 (APTAPTQGV) form a flexible linker region. A domain III region spans residues 152-204 (APVVVVDQVTQALTGLGFTEKQADDAVAAVLSADPGLDTSAALRAALAKLGGK).

The protein belongs to the RuvA family. As to quaternary structure, homotetramer. Forms an RuvA(8)-RuvB(12)-Holliday junction (HJ) complex. HJ DNA is sandwiched between 2 RuvA tetramers; dsDNA enters through RuvA and exits via RuvB. An RuvB hexamer assembles on each DNA strand where it exits the tetramer. Each RuvB hexamer is contacted by two RuvA subunits (via domain III) on 2 adjacent RuvB subunits; this complex drives branch migration. In the full resolvosome a probable DNA-RuvA(4)-RuvB(12)-RuvC(2) complex forms which resolves the HJ.

The protein localises to the cytoplasm. Functionally, the RuvA-RuvB-RuvC complex processes Holliday junction (HJ) DNA during genetic recombination and DNA repair, while the RuvA-RuvB complex plays an important role in the rescue of blocked DNA replication forks via replication fork reversal (RFR). RuvA specifically binds to HJ cruciform DNA, conferring on it an open structure. The RuvB hexamer acts as an ATP-dependent pump, pulling dsDNA into and through the RuvAB complex. HJ branch migration allows RuvC to scan DNA until it finds its consensus sequence, where it cleaves and resolves the cruciform DNA. This Corynebacterium efficiens (strain DSM 44549 / YS-314 / AJ 12310 / JCM 11189 / NBRC 100395) protein is Holliday junction branch migration complex subunit RuvA.